A 382-amino-acid polypeptide reads, in one-letter code: Probable trehalose-phosphate phosphatase 2 (382 aa).

This sequence belongs to the trehalose phosphatase family. A divalent metal cation is required as a cofactor. In terms of tissue distribution, expressed in roots and shoots.

The enzyme catalyses alpha,alpha-trehalose 6-phosphate + H2O = alpha,alpha-trehalose + phosphate. The protein operates within glycan biosynthesis; trehalose biosynthesis. Removes the phosphate from trehalose 6-phosphate to produce free trehalose. Trehalose accumulation in plant may improve abiotic stress tolerance. This Oryza sativa subsp. japonica (Rice) protein is Probable trehalose-phosphate phosphatase 2 (TPP2).